The chain runs to 443 residues: Probable D-serine dehydratase (443 aa).

An N6-(pyridoxal phosphate)lysine modification is found at Lys106.

The protein belongs to the serine/threonine dehydratase family. DsdA subfamily. Pyridoxal 5'-phosphate serves as cofactor.

The enzyme catalyses D-serine = pyruvate + NH4(+). This is Probable D-serine dehydratase from Cupriavidus pinatubonensis (strain JMP 134 / LMG 1197) (Cupriavidus necator (strain JMP 134)).